A 171-amino-acid polypeptide reads, in one-letter code: LIM domain transcription factor LMO4-A (171 aa).

Polar residues predominate over residues 1 to 19 (MVNNRSSESTTTAVSSNGS). A disordered region spans residues 1–21 (MVNNRSSESTTTAVSSNGSPP). LIM zinc-binding domains follow at residues 22-84 (KACA…LFGN) and 86-148 (GACN…GLLN).

At the start of gastrulation (stage 10), expressed in the mesodermal marginal zone. Shortly after (stage 11), expression is down-regulated in the dorsal most region. During neurulation, expressed in the neural plate and ventral epidermis. At late neurula stages, also expressed more rostrally, and then in the brain, migrating neural crests and ventral epidermis.

Its function is as follows. Acts as a positive cofactor of GATA transcription factors to establish the identity of the ventral mesoderm during gastrulation. Down-regulation in the dorsal mesoderm is necessary for the proper formation of this territory since, when present, lmo4 may bind ldb1 and restrict the availability of this cofactor for Spemman organizer transcription factors. At neurula stages, suppresses primary neuron differentiation and modulates gene expression at the Isthmic Organizer of the midbrain-hindbrain boundary. This Xenopus laevis (African clawed frog) protein is LIM domain transcription factor LMO4-A (lmo4-a).